The following is a 147-amino-acid chain: Large ribosomal subunit protein uL15 (147 aa).

The segment at 1–42 (MTIKLHHLRPAPGSKSNKIRVGRGEGGKRGKTAGRGTKGTKA) is disordered.

Belongs to the universal ribosomal protein uL15 family. In terms of assembly, part of the 50S ribosomal subunit.

In terms of biological role, binds to the 23S rRNA. In Rhodococcus erythropolis (strain PR4 / NBRC 100887), this protein is Large ribosomal subunit protein uL15.